A 579-amino-acid polypeptide reads, in one-letter code: Mycobactin import ATP-binding/permease protein IrtB (579 aa).

Residues 1–16 lie on the Cytoplasmic side of the membrane; the sequence is MIRTWIALVPNDHRAR. A helical transmembrane segment spans residues 17 to 37; it reads LIGFALLAFCSVVARAVGTVL. Residues 17–299 enclose the ABC transmembrane type-1 domain; that stretch reads LIGFALLAFC…VSELAPALES (283 aa). Over 38 to 52 the chain is Periplasmic; the sequence is LVPLMAALFGEAPQR. A helical transmembrane segment spans residues 53–73; the sequence is AWLWLGWLSAATVAGWVLDAV. Over 74–123 the chain is Cytoplasmic; the sequence is TARIGIELGFAVLNHTQHDVADRLPVVRLDWFTAENTATARQAIAATGPE. The helical transmembrane segment at 124–146 threads the bilayer; it reads LVGLVVNLVTPLTSAILLPAVIA. The Periplasmic segment spans residues 147 to 155; sequence LALLPISWQ. Residues 156 to 178 traverse the membrane as a helical segment; it reads LGVAALAGVPLLLGALWASAAFA. Residues 179–237 are Cytoplasmic-facing; it reads RRADTAADKANTALTERIIEFARTQQALRAARRVEPARSLVGNALASQHTATMRLLGMQ. Residues 238 to 258 form a helical membrane-spanning segment; sequence IPGQLLFSIASQLALIVLAGT. Topologically, residues 259–579 are periplasmic; the sequence is TAALTITGTL…EAAEWQILAE (321 aa). In terms of domain architecture, ABC transporter spans 332–567; the sequence is IEFDDVAFGY…GGRFSQFWRQ (236 aa). 366-373 contributes to the ATP binding site; it reads GPSGCGKS.

The protein belongs to the ABC transporter superfamily. Siderophore-Fe(3+) uptake transporter (SIUT) (TC 3.A.1.21) family. In terms of assembly, forms a heterodimer with IrtA.

It is found in the cell inner membrane. Part of the ABC transporter complex IrtAB involved in the import of iron-bound mycobactin (Fe-MBT) and carboxymycobactin (Fe-cMBT). Transmembrane domains (TMD) form a pore in the membrane and the ATP-binding domain (NBD) is responsible for energy generation. This is Mycobactin import ATP-binding/permease protein IrtB (irtB) from Mycobacterium bovis (strain ATCC BAA-935 / AF2122/97).